A 159-amino-acid chain; its full sequence is Ribosomal RNA large subunit methyltransferase H (159 aa).

S-adenosyl-L-methionine contacts are provided by residues Leu76, Gly108, and 127-132 (FSKMTF).

This sequence belongs to the RNA methyltransferase RlmH family. As to quaternary structure, homodimer.

The protein localises to the cytoplasm. The catalysed reaction is pseudouridine(1915) in 23S rRNA + S-adenosyl-L-methionine = N(3)-methylpseudouridine(1915) in 23S rRNA + S-adenosyl-L-homocysteine + H(+). In terms of biological role, specifically methylates the pseudouridine at position 1915 (m3Psi1915) in 23S rRNA. In Halalkalibacterium halodurans (strain ATCC BAA-125 / DSM 18197 / FERM 7344 / JCM 9153 / C-125) (Bacillus halodurans), this protein is Ribosomal RNA large subunit methyltransferase H.